Consider the following 720-residue polypeptide: MSMFNVHRKEITWGGRKLVLETGKVARQADGAVMVTYGETSVLCTVVGAKSQKPGIDFFPLTVNYQEKAFAAGKIPGGFFKREGRPSEKETLVSRLIDRPIRPLFADGFRNEVQVVCTVLSHDLENDPDIAALVGTSAALTISGLPFMGPVGAARVGYVDGAYVLNPLVGDLPKSELDLVVAGTVEGVLMVESEAKQLSEDVMLGAVMFGHREFQAVIQAIIDLAEECAKDPWDLPEPPAEVAVVTGKFNDAGVPAELAEAYKIIKKQDRYAAVGAVKKKALALLTEAAEIAVAGGILKHLEADVVRGNILKTGVRIDGRDTKTVRAIEVEVGVLPRAHGSALFTRGETQALVVATLGTGQDEQIIDQLAGEYREHFMLHYNFPPYSVGEAGRMGSPGRREIGHGKLAWRAMRPCLPAKESFPYTMRVVSEITESNGSSSMASVCGSSLALMDAGVPLPKPVAGIAMGLIKEGTDFAVLSDILGDEDHLGDMDFKVAGTVDGVTALQMDIKITSITEEIMKIALGQAKDGRIHILGEMNKGLDHARDSVSGNAPRITTISIPKEKIREVIGTGGKVIREICEQTGAKIDIDDDGTIKVASVDADAAQRAIDWIRGIVAEPELGVIYNGKVVKVVDFGAFVNFLGSRDGLVHISELARERVAKTADVVKQGDVVKVKVLGFDDRGKVKLSMKQVDQTTGEDISAQLEAERAASKRERHHED.

The Mg(2+) site is built by Asp-487 and Asp-493. The KH domain occupies 554–613 (PRITTISIPKEKIREVIGTGGKVIREICEQTGAKIDIDDDGTIKVASVDADAAQRAIDWI). Residues 623-691 (GVIYNGKVVK…DRGKVKLSMK (69 aa)) form the S1 motif domain. Residues 695–720 (QTTGEDISAQLEAERAASKRERHHED) form a disordered region. The segment covering 706–720 (EAERAASKRERHHED) has biased composition (basic and acidic residues).

It belongs to the polyribonucleotide nucleotidyltransferase family. The cofactor is Mg(2+).

Its subcellular location is the cytoplasm. The catalysed reaction is RNA(n+1) + phosphate = RNA(n) + a ribonucleoside 5'-diphosphate. Functionally, involved in mRNA degradation. Catalyzes the phosphorolysis of single-stranded polyribonucleotides processively in the 3'- to 5'-direction. This is Polyribonucleotide nucleotidyltransferase from Paramagnetospirillum magneticum (strain ATCC 700264 / AMB-1) (Magnetospirillum magneticum).